Consider the following 124-residue polypeptide: Heat-labile enterotoxin B chain (124 aa).

The N-terminal stretch at 1–21 (MNKVKCYVLFTALLSSLYAHG) is a signal peptide. C30 and C107 are joined by a disulfide.

Heterohexamer of one A chain and of five B chains.

In terms of biological role, the biological activity of the toxin is produced by the A chain, which activates intracellular adenyl cyclase. This is Heat-labile enterotoxin B chain (eltB) from Escherichia coli.